The sequence spans 426 residues: Enolase (426 aa).

A (2R)-2-phosphoglycerate-binding site is contributed by glutamine 163. Glutamate 205 acts as the Proton donor in catalysis. Mg(2+) contacts are provided by aspartate 242, glutamate 283, and aspartate 310. The (2R)-2-phosphoglycerate site is built by lysine 335, arginine 364, serine 365, and lysine 386. The Proton acceptor role is filled by lysine 335.

The protein belongs to the enolase family. The cofactor is Mg(2+).

It localises to the cytoplasm. It is found in the secreted. Its subcellular location is the cell surface. It carries out the reaction (2R)-2-phosphoglycerate = phosphoenolpyruvate + H2O. It participates in carbohydrate degradation; glycolysis; pyruvate from D-glyceraldehyde 3-phosphate: step 4/5. Functionally, catalyzes the reversible conversion of 2-phosphoglycerate (2-PG) into phosphoenolpyruvate (PEP). It is essential for the degradation of carbohydrates via glycolysis. The protein is Enolase of Paenarthrobacter aurescens (strain TC1).